We begin with the raw amino-acid sequence, 517 residues long: Alpha,alpha-trehalose-phosphate synthase [UDP-forming] 1 (517 aa).

Residues Y98 and D152 each contribute to the D-glucose 6-phosphate site. Residues R288 and K293 each contribute to the UDP site. UDP-alpha-D-glucose contacts are provided by R288 and K293. R326 is a binding site for D-glucose 6-phosphate. Residue 387-395 (DGMNLVAYE) participates in UDP-alpha-D-glucose binding. 391-395 (LVAYE) provides a ligand contact to UDP. Positions 486 to 517 (FHAKKASFSDNNSENGEPSNGVETPAQEQVAQ) are disordered. Polar residues predominate over residues 493-517 (FSDNNSENGEPSNGVETPAQEQVAQ).

It belongs to the glycosyltransferase 20 family.

The enzyme catalyses D-glucose 6-phosphate + UDP-alpha-D-glucose = alpha,alpha-trehalose 6-phosphate + UDP + H(+). It participates in carbohydrate biosynthesis. Its function is as follows. Synthase catalytic subunit of the trehalose synthase complex that catalyzes the production of trehalose from glucose-6-phosphate and UDP-alpha-D-glucose in a two step process. The sequence is that of Alpha,alpha-trehalose-phosphate synthase [UDP-forming] 1 from Aspergillus niger.